A 98-amino-acid polypeptide reads, in one-letter code: Putative septation protein SpoVG (98 aa).

This sequence belongs to the SpoVG family.

Essential for sporulation. Interferes with or is a negative regulator of the pathway leading to asymmetric septation. The sequence is that of Putative septation protein SpoVG from Bacillus pumilus (strain SAFR-032).